A 262-amino-acid chain; its full sequence is MNSPAPVGSPAPVSAPSLDVAGLAFAYPDGHQALFGVDFRVERGERVALLGPNGAGKTTLVLHLNGILTGGAGTVTVAGLPVGKRHMAQIRRKVGIVFQDPDDQLFMPTVREDVAFGPAAAGLTGAELEARVDRALDQVGMAEFKGRPPHHLSFGQRRRVAVATVLAMEPEILVLDEPSSNLDPASRRELADILRSLDVTVLMVTHDLPYALELCPRSLILSEGVIAADGRTGELLADDTLMRAHRLELPFGFDPRSVTMGA.

The ABC transporter domain maps to 18–248 (LDVAGLAFAY…DTLMRAHRLE (231 aa)). An ATP-binding site is contributed by 51–58 (GPNGAGKT).

This sequence belongs to the ABC transporter superfamily.

The protein resides in the cell membrane. Its function is as follows. Probably part of an ABC transporter complex. Responsible for energy coupling to the transport system. In Streptomyces avermitilis (strain ATCC 31267 / DSM 46492 / JCM 5070 / NBRC 14893 / NCIMB 12804 / NRRL 8165 / MA-4680), this protein is Putative ABC transporter ATP-binding protein SAV_3608.